The sequence spans 1105 residues: SWI/SNF complex subunit SMARCC1 (1105 aa).

Ala-2 bears the N-acetylalanine mark. The interval 28–302 (LAVYRRKDGG…PVSFRQRIST (275 aa)) is marR-like, BRCT and chromo domains module. One can recognise a MarR-like domain in the interval 38–164 (PATKFWESPE…IEKTLVQNNC (127 aa)). One can recognise a BRCT; N-terminus domain in the interval 168–211 (PNIYLIPDIDLKLANKLKDIIKRHQGTFTDEKSKASHHIYPYSS). Residue Lys-179 forms a Glycyl lysine isopeptide (Lys-Gly) (interchain with G-Cter in SUMO2) linkage. A Chromo domain is found at 217–245 (EWLRPVMRKEKQVLVHWGFYPDSYDTWVH). The 25-residue stretch at 261 to 285 (KPWKVHVKWILDTDIFNEWMNEEDY) folds into the BRCT; C-terminus domain. Positions 296-439 (FRQRISTKNE…DQSRSVDLGE (144 aa)) are disordered. Positions 302 to 318 (TKNEEPVRSPERRDRKA) are enriched in basic and acidic residues. Phosphoserine occurs at positions 310, 328, and 330. Residue Thr-335 is modified to Phosphothreonine. N6-acetyllysine occurs at positions 345 and 346. Ser-350 carries the phosphoserine modification. An N6-acetyllysine modification is found at Lys-354. Ser-357 bears the Phosphoserine mark. An N6-acetyllysine; alternate modification is found at Lys-359. Residue Lys-359 forms a Glycyl lysine isopeptide (Lys-Gly) (interchain with G-Cter in SUMO2); alternate linkage. Thr-398 carries the post-translational modification Phosphothreonine. An SWIRM domain is found at 449 to 546 (IIIPSYASWF…YQVDPESRPM (98 aa)). A Phosphoserine modification is found at Ser-573. A Glycyl lysine isopeptide (Lys-Gly) (interchain with G-Cter in SUMO2) cross-link involves residue Lys-592. In terms of domain architecture, SANT spans 618 to 669 (SAGREWTEQETLLLLEALEMYKDDWNKVSEHVGSRTQDECILHFLRLPIEDP). Residue Lys-739 forms a Glycyl lysine isopeptide (Lys-Gly) (interchain with G-Cter in SUMO2) linkage. The tract at residues 745 to 860 (ARASGKVDPT…DTGKKKVEHE (116 aa)) is disordered. The segment covering 776–785 (AEEEKMEADP) has biased composition (acidic residues). The segment covering 789–860 (QPEKAENKVE…DTGKKKVEHE (72 aa)) has biased composition (basic and acidic residues). Residue Lys-796 forms a Glycyl lysine isopeptide (Lys-Gly) (interchain with G-Cter in SUMO2) linkage. Phosphoserine is present on residues Ser-822 and Ser-825. Residues Lys-829 and Lys-856 each participate in a glycyl lysine isopeptide (Lys-Gly) (interchain with G-Cter in SUMO2) cross-link. A coiled-coil region spans residues 914–946 (FEELETIMDREKEALEQQRQQLLTERQNFHMEQ). Lys-948 is modified (N6-acetyllysine). 2 disordered regions span residues 956–1028 (QQME…PGQH) and 1041–1105 (IHPS…SAAP). The span at 957–993 (QMEQQQHGQNPQQAHQHSGGPGLAPLGAAGHPGMMPH) shows a compositional bias: low complexity. Composition is skewed to pro residues over residues 994-1017 (QQPP…PGQI) and 1048-1057 (PTPPGMPPMP). Arg-1064 carries the post-translational modification Asymmetric dimethylarginine. Pro residues predominate over residues 1073–1105 (MYPPPPQQQPPPPPPADGVPPPPAPGPPASAAP).

Belongs to the SMARCC family. Component of the multiprotein chromatin-remodeling complexes SWI/SNF: SWI/SNF-A (BAF), SWI/SNF-B (PBAF) and related complexes. The canonical complex contains a catalytic subunit (either SMARCA4/BRG1/BAF190A or SMARCA2/BRM/BAF190B) and at least SMARCE1, ACTL6A/BAF53, SMARCC1/BAF155, SMARCC2/BAF170, and SMARCB1/SNF5/BAF47. Other subunits specific to each of the complexes may also be present permitting several possible combinations developmentally and tissue specific. Component of the BAF complex, which includes at least actin (ACTB), ARID1A/BAF250A, ARID1B/BAF250B, SMARCA2/BRM, SMARCA4/BRG1, ACTL6A/BAF53, ACTL6B/BAF53B, SMARCE1/BAF57, SMARCC1/BAF155, SMARCC2/BAF170, SMARCB1/SNF5/INI1, and one or more SMARCD1/BAF60A, SMARCD2/BAF60B, or SMARCD3/BAF60C. In muscle cells, the BAF complex also contains DPF3. Component of neural progenitors-specific chromatin remodeling complex (npBAF complex) composed of at least, ARID1A/BAF250A or ARID1B/BAF250B, SMARCD1/BAF60A, SMARCD3/BAF60C, SMARCA2/BRM/BAF190B, SMARCA4/BRG1/BAF190A, SMARCB1/BAF47, SMARCC1/BAF155, SMARCE1/BAF57, SMARCC2/BAF170, PHF10/BAF45A, ACTL6A/BAF53A and actin. Component of neuron-specific chromatin remodeling complex (nBAF complex) composed of at least, ARID1A/BAF250A or ARID1B/BAF250B, SMARCD1/BAF60A, SMARCD3/BAF60C, SMARCA2/BRM/BAF190B, SMARCA4/BRG1/BAF190A, SMARCB1/BAF47, SMARCC1/BAF155, SMARCE1/BAF57, SMARCC2/BAF170, DPF1/BAF45B, DPF3/BAF45C, ACTL6B/BAF53B and actin. Component of the SWI/SNF-B (PBAF) chromatin remodeling complex, at least composed of SMARCA4/BRG1, SMARCB1/BAF47/SNF5, ACTL6A/BAF53A or ACTL6B/BAF53B, SMARCE1/BAF57, SMARCD1/BAF60A, SMARCD2/BAF60B, perhaps SMARCD3/BAF60C, SMARCC1/BAF155, SMARCC2/BAF170, PBRM1/BAF180, ARID2/BAF200 and actin. Component of SWI/SNF (GBAF) subcomplex, which includes at least BICRA or BICRAL (mutually exclusive), BRD9, SS18, SMARCA2/BRM, SMARCA4/BRG1/BAF190A, ACTL6A/BAF53, SMARCC1/BAF155, and SMARCD1/BAF60A. May also interact with the SIN3A histone deacetylase transcription repressor complex in conjunction with SMARCA2 and SMARCA4. The minimal complex composed of SMARCC1 and SMARCA4 seems to be able to associate with cyclin such as CCNE1 or transcription factors such as KLF1 or GATA1. Interacts with NR3C1 and SMARD1. Interacts with TRIP12; leading to disrupt interaction between TRIP12 and SMARCE1 and prevent SMARCE1 ubiquitination. Interacts with CEBPB (when not methylated). Interacts with KDM6B. Interacts with MKKS; the interaction takes place predominantly in the cytoplasm and may modulate SMARCC1 location. Interacts with DPF2. Interacts with PRDM1/BLIMP1. Interacts with DPF3a (isoform 2 of DPF3/BAF45C) and with HDGFL2 in a DPF3a-dependent manner. Phosphorylated on undefined residues at the G2/M transition by ERK1 and other kinases. This may contribute to cell cycle specific inactivation of remodeling complexes containing the phosphorylated protein. As to expression, expressed in brain, heart, muscle, placenta, lung, liver, muscle, kidney and pancreas.

It is found in the nucleus. The protein localises to the cytoplasm. In terms of biological role, involved in transcriptional activation and repression of select genes by chromatin remodeling (alteration of DNA-nucleosome topology). Component of SWI/SNF chromatin remodeling complexes that carry out key enzymatic activities, changing chromatin structure by altering DNA-histone contacts within a nucleosome in an ATP-dependent manner. May stimulate the ATPase activity of the catalytic subunit of the complex. Belongs to the neural progenitors-specific chromatin remodeling complex (npBAF complex) and the neuron-specific chromatin remodeling complex (nBAF complex). During neural development a switch from a stem/progenitor to a postmitotic chromatin remodeling mechanism occurs as neurons exit the cell cycle and become committed to their adult state. The transition from proliferating neural stem/progenitor cells to postmitotic neurons requires a switch in subunit composition of the npBAF and nBAF complexes. As neural progenitors exit mitosis and differentiate into neurons, npBAF complexes which contain ACTL6A/BAF53A and PHF10/BAF45A, are exchanged for homologous alternative ACTL6B/BAF53B and DPF1/BAF45B or DPF3/BAF45C subunits in neuron-specific complexes (nBAF). The npBAF complex is essential for the self-renewal/proliferative capacity of the multipotent neural stem cells. The nBAF complex along with CREST plays a role regulating the activity of genes essential for dendrite growth. The polypeptide is SWI/SNF complex subunit SMARCC1 (Homo sapiens (Human)).